The chain runs to 725 residues: ATP-dependent rRNA helicase SPB4 (725 aa).

The Q motif signature appears at Trp15 to Ala43. Positions Ile46 to Ile260 constitute a Helicase ATP-binding domain. Ala59 to Thr66 is a binding site for ATP. Residues Glu119 to Leu156 are disordered. Over residues Pro132–Ser142 the composition is skewed to low complexity. Residues Pro143–Pro152 are compositionally biased toward pro residues. The DEAD box motif lies at Asp207 to Asp210. One can recognise a Helicase C-terminal domain in the interval Lys295–Asp458. The tract at residues Ala591–Glu725 is disordered. 2 stretches are compositionally biased toward basic and acidic residues: residues Ala603–Trp646 and Glu685–Ser707. Residues Gly709 to Glu725 show a composition bias toward gly residues.

Belongs to the DEAD box helicase family. DDX55/SPB4 subfamily. In terms of assembly, component of pre-60S ribosomal complexes.

The protein localises to the nucleus. It is found in the nucleolus. The enzyme catalyses ATP + H2O = ADP + phosphate + H(+). ATP-binding RNA helicase involved in the biogenesis of 60S ribosomal subunits. Binds 90S pre-ribosomal particles and dissociates from pre-60S ribosomal particles after processing of 27SB pre-rRNA. Required for the normal formation of 18S rRNA through the processing of pre-rRNAs at sites A0, A1 and A2, and the normal formation of 25S and 5.8S rRNAs through the processing of pre-rRNAs at sites C1 and C2. This is ATP-dependent rRNA helicase SPB4 from Cryptococcus neoformans var. neoformans serotype D (strain JEC21 / ATCC MYA-565) (Filobasidiella neoformans).